We begin with the raw amino-acid sequence, 256 residues long: N-acetylglucosaminyldiphosphoundecaprenol N-acetyl-beta-D-mannosaminyltransferase (256 aa).

It belongs to the glycosyltransferase 26 family. TagA/TarA subfamily.

It catalyses the reaction UDP-N-acetyl-alpha-D-mannosamine + N-acetyl-alpha-D-glucosaminyl-di-trans,octa-cis-undecaprenyl diphosphate = N-acetyl-beta-D-mannosaminyl-(1-&gt;4)-N-acetyl-alpha-D-glucosaminyl di-trans,octa-cis-undecaprenyl diphosphate + UDP + H(+). It participates in cell wall biogenesis; poly(glycerol phosphate) teichoic acid biosynthesis. Catalyzes the conversion of GlcNAc-PP-undecaprenol into ManNAc-GlcNAc-PP-undecaprenol, the first committed lipid intermediate in the de novo synthesis of teichoic acid. The chain is N-acetylglucosaminyldiphosphoundecaprenol N-acetyl-beta-D-mannosaminyltransferase from Bacillus subtilis (strain 168).